A 1073-amino-acid chain; its full sequence is TSC22 domain family protein 1 (1073 aa).

A required for interaction with TGFBR1 and promotion of TGF-beta signaling region spans residues 1 to 98 (MHQPPESTAA…SQAQLQAQPL (98 aa)). Disordered regions lie at residues 22 to 110 (MAHP…KKSG), 125 to 205 (ISSN…PHLP), 220 to 288 (LHHH…SPAS), 458 to 486 (VTSERESTSGSSVSSSVSTLSHYTESVGS), 607 to 628 (YSQAAPPVQTPLPGAPPPQQLQ), and 742 to 766 (VQQPSTQVPPSVIQQGAPPSSQVVP). The segment covering 36–45 (GSASALNAAG) has biased composition (low complexity). Residues 58-70 (FPPPSLLQPPPPA) show a composition bias toward pro residues. The span at 84 to 100 (SLNLLSQAQLQAQPLAP) shows a compositional bias: low complexity. A compositionally biased stretch (acidic residues) spans 133-142 (EDTESYDDLD). Basic residues predominate over residues 220–240 (LHHHHQIHHGHHLQHGHHHPS). The span at 257–271 (PVSRKLSTTGSSDSI) shows a compositional bias: polar residues. At serine 263 the chain carries Phosphoserine. 2 stretches are compositionally biased toward low complexity: residues 272–288 (TPVAPTSAVSSSGSPAS) and 465–483 (TSGSSVSSSVSTLSHYTES). The span at 614 to 625 (VQTPLPGAPPPQ) shows a compositional bias: pro residues. The segment covering 742-764 (VQQPSTQVPPSVIQQGAPPSSQV) has biased composition (polar residues). Positions 1006-1027 (LKEQIKELIEKNSQLEQENNLL) are leucine-zipper. The interval 1037 to 1073 (AQFQAQLQTGSPPATTQPQGTTQPPAQPASQGSGPTA) is disordered. Residues 1044 to 1073 (QTGSPPATTQPQGTTQPPAQPASQGSGPTA) are compositionally biased toward low complexity.

Belongs to the TSC-22/Dip/Bun family. Forms homodimers. Forms heterodimers. Component of a complex composed of TSC22D1 (via N-terminus), TGFBR1 and TGFBR2; the interaction between TSC22D1 and TGFBR1 is inhibited by SMAD7 and promoted by TGFB1. Interacts with SMAD7; the interaction requires TGF-beta and the interaction is inhibited by TGFBR1. Interacts with TPT1/fortilin; interaction results in the destabilization of TSC22D1 protein and prevents TSC22D1-mediated apoptosis. Interacts with SMAD4 (via N-terminus). Interacts with ACVRL1/ALK1, ACVR1/ALK2, BMPR1A/ALK3, ACVR1B/ALK4, BMPR1B/ALK6, ACVR2A/ACTRII, and BMPR2. Interacts with SMAD6. Interacts with TFE3; the interaction is enhanced in the presence of TGF-beta. As to quaternary structure, forms a heterodimer with TSC22D4/THG1. In terms of assembly, forms a heterodimer with TSC22D4/THG1. Interacts with histone H1-2. Interacts with GNL3. Interacts with histone H1-2. As to expression, ubiquitously expressed in adult tissues. Expressed in the postmitotic epithelial compartment at the top of intestinal mucosal villi.

It is found in the cytoplasm. The protein resides in the nucleus. Its subcellular location is the cell membrane. The protein localises to the mitochondrion. Transcriptional repressor. Acts on the C-type natriuretic peptide (CNP) promoter. Acts to promote CASP3-mediated apoptosis. Positively regulates TGF-beta signaling by interacting with SMAD7 which inhibits binding of SMAD7 to TGFBR1, preventing recruitment of SMURF ubiquitin ligases to TGFBR1 and inhibiting SMURF-mediated ubiquitination and degradation of TGFBR1. Contributes to enhancement of TGF-beta signaling by binding to and modulating the transcription activator activity of SMAD4. Promotes TGF-beta-induced transcription of COL1A2; via its interaction with TFE3 at E-boxes in the gene proximal promoter. Plays a role in the repression of hematopoietic precursor cell growth. Promotes IL2 deprivation-induced apoptosis in T-lymphocytes, via repression of TSC22D3/GILZ transcription and activation of the caspase cascade. Functionally, may act to negatively regulate TGFB3 signaling and thereby inhibit cell death in mammary gland cells. In terms of biological role, positively regulates cell death in response to TGFB3 during mammary gland involution. The protein is TSC22 domain family protein 1 of Homo sapiens (Human).